The primary structure comprises 133 residues: Fluoride-specific ion channel FluC (133 aa).

4 helical membrane passes run 5-25 (VPAT…LGAL), 43-63 (VATL…YVVI), 76-96 (VIMI…IESL), and 108-128 (ISYV…AIVL). G83 and T86 together coordinate Na(+).

This sequence belongs to the fluoride channel Fluc/FEX (TC 1.A.43) family.

The protein localises to the cell inner membrane. It catalyses the reaction fluoride(in) = fluoride(out). Na(+) is not transported, but it plays an essential structural role and its presence is essential for fluoride channel function. Fluoride-specific ion channel. Important for reducing fluoride concentration in the cell, thus reducing its toxicity. The sequence is that of Fluoride-specific ion channel FluC from Saccharophagus degradans (strain 2-40 / ATCC 43961 / DSM 17024).